Here is a 347-residue protein sequence, read N- to C-terminus: Dehydratase asqC (347 aa).

The first 18 residues, 1–18 (MRPAILAAFSTLPAAAKA), serve as a signal peptide directing secretion. Asparagine 51, asparagine 103, asparagine 131, asparagine 143, asparagine 215, asparagine 264, and asparagine 281 each carry an N-linked (GlcNAc...) asparagine glycan.

The enzyme catalyses [(1'E)-5'-(3',3'-dimethyloxiran-2'-yl)-3'-hydroxy-3'-methylpent-1'-en-1'-yl]-quinolinone B = (1'E,3'E)-5-(3,3-dimethyloxiran-2-yl)-3-methylhexa-1,3-dienyl-quinolinone B + H2O. It participates in secondary metabolite biosynthesis. It functions in the pathway alkaloid biosynthesis. Its pathway is mycotoxin biosynthesis. Dehydratase; part of the gene cluster that mediates the biosynthesis of the aspoquinolone mycotoxins. Within the pathway, the dehydratase asqC catalyzes the dehydratation of the epoxide at C-3 to produce (1'E,3'E)-5-(3,3-dimethyloxiran-2-yl)-3-methylhexa-1,3-dienyl-quinolinone B. The first step of the pathway is catalyzed by the nonribosomal peptide synthetase asqK that condenses anthranilic acid and O-methyl-L-tyrosine to produce 4'-methoxycyclopeptin. 4'-methoxycyclopeptin is then converted to 4'-methoxydehydrocyclopeptin by the ketoglutarate-dependent dioxygenase asqJ. AsqJ also converts its first product 4'-methoxydehydrocyclopeptin to 4'-methoxycyclopenin. The following conversion of 4'-methoxycyclopenin into 4'-methoxyviridicatin is catalyzed by the cyclopenase asqI. 4'-methoxyviridicatin is the precursor of quinolone natural products, and is further converted to quinolinone B. The prenyltransferase asqH1 then catalyzes the canonical Friedel-Crafts alkylation of quinolinone B with dimethylallyl cation to yield dimethylallyl quinolone, which is subjected to FAD-dependent dehydrogenation by the FAD-linked oxidoreductase asqF to yield conjugated aryl diene. The delta(3') double bond then serves as the site of the second alkylation with DMAPP catalyzed by the prenyltransferase asqH2 to yield a carbenium ion intermediate, which can be attacked by H(2)O to yield a styrenyl quinolone containing a C3'-hydroxyprenyl chain. The FAD-dependent monooxygenase asqG performs epoxidation of the terminal C7'-C8' olefin. Finally, after dehydratation of the epoxide at C3 by asqC, the quinolone epoxide rearrangement protein asqO catalyzes an enzymatic 3-exo-tet cyclization to yield the cyclopropyl-THF ring system in aspoquinolone. In Emericella nidulans (strain FGSC A4 / ATCC 38163 / CBS 112.46 / NRRL 194 / M139) (Aspergillus nidulans), this protein is Dehydratase asqC.